Here is a 276-residue protein sequence, read N- to C-terminus: Bis(5'-nucleosyl)-tetraphosphatase, symmetrical (276 aa).

It belongs to the Ap4A hydrolase family.

The catalysed reaction is P(1),P(4)-bis(5'-adenosyl) tetraphosphate + H2O = 2 ADP + 2 H(+). Its function is as follows. Hydrolyzes diadenosine 5',5'''-P1,P4-tetraphosphate to yield ADP. This Neisseria meningitidis serogroup A / serotype 4A (strain DSM 15465 / Z2491) protein is Bis(5'-nucleosyl)-tetraphosphatase, symmetrical (apaH).